Here is a 176-residue protein sequence, read N- to C-terminus: NAD(P)H-quinone oxidoreductase subunit I, chloroplastic (176 aa).

2 consecutive 4Fe-4S ferredoxin-type domains span residues 55-84 (GRIH…VDWE) and 95-124 (LNYS…MTEE). Cysteine 64, cysteine 67, cysteine 70, cysteine 74, cysteine 104, cysteine 107, cysteine 110, and cysteine 114 together coordinate [4Fe-4S] cluster.

Belongs to the complex I 23 kDa subunit family. NDH is composed of at least 16 different subunits, 5 of which are encoded in the nucleus. It depends on [4Fe-4S] cluster as a cofactor.

Its subcellular location is the plastid. It localises to the chloroplast thylakoid membrane. It carries out the reaction a plastoquinone + NADH + (n+1) H(+)(in) = a plastoquinol + NAD(+) + n H(+)(out). The catalysed reaction is a plastoquinone + NADPH + (n+1) H(+)(in) = a plastoquinol + NADP(+) + n H(+)(out). Functionally, NDH shuttles electrons from NAD(P)H:plastoquinone, via FMN and iron-sulfur (Fe-S) centers, to quinones in the photosynthetic chain and possibly in a chloroplast respiratory chain. The immediate electron acceptor for the enzyme in this species is believed to be plastoquinone. Couples the redox reaction to proton translocation, and thus conserves the redox energy in a proton gradient. In Populus trichocarpa (Western balsam poplar), this protein is NAD(P)H-quinone oxidoreductase subunit I, chloroplastic.